The following is a 180-amino-acid chain: Ribulose bisphosphate carboxylase small subunit 1A, chloroplastic (180 aa).

The transit peptide at 1-54 (MASSMLSSATMVASPAQATMVAPFNGLKSSAAFPATRKANNDITSITSNGGRVN) directs the protein to the chloroplast. Ser113 is modified (phosphoserine).

The protein belongs to the RuBisCO small chain family. As to quaternary structure, heterohexadecamer of 8 large and 8 small subunits.

The protein localises to the plastid. It is found in the chloroplast membrane. Its subcellular location is the chloroplast stroma. In terms of biological role, ruBisCO catalyzes two reactions: the carboxylation of D-ribulose 1,5-bisphosphate, the primary event in carbon dioxide fixation, as well as the oxidative fragmentation of the pentose substrate. Both reactions occur simultaneously and in competition at the same active site. Although the small subunit is not catalytic it is essential for maximal activity. The polypeptide is Ribulose bisphosphate carboxylase small subunit 1A, chloroplastic (RBCS-1A) (Arabidopsis thaliana (Mouse-ear cress)).